A 612-amino-acid chain; its full sequence is Proline-rich protein 14 (612 aa).

The residue at position 1 (methionine 1) is an N-acetylmethionine. Composition is skewed to polar residues over residues 1–15 and 86–96; these read MDLPGNSSPFTQPSL and VCTQSPALPSQ. Disordered regions lie at residues 1-48, 65-96, 119-150, and 206-256; these read MDLP…EKAS, VPLTHKEDTPSPLTHNHHQDPVCTQSPALPSQ, RARQSSPALRMRSRAASGPEESPSKKTDQVPQ, and PTLT…PALE. Residues 1–135 are sufficient for heterochromatin association in interphase and chromatin association in anaphase; it reads MDLPGNSSPF…ALRMRSRAAS (135 aa). The segment at 85 to 405 is required for the interaction with GRB2 and sufficient to promote the phosphorylation of AKT and cell proliferation; it reads PVCTQSPALP…MARTPPPPRP (321 aa). Residues 136 to 392 are required for nuclear lamina association; sequence GPEESPSKKT…QSRPRRHTVG (257 aa). The span at 243-252 shows a compositional bias: pro residues; that stretch reads ADPPESPVPD. Serine 307 bears the Phosphoserine mark. Disordered regions lie at residues 323–405, 444–463, and 553–583; these read QSRA…PPRP, LGSTKGKELRASKDKVFSDP, and DSSLPRSRRPSRGVRTAASRTLTPNLAPSQD. The segment covering 342–359 has biased composition (polar residues); it reads WRTQCNSLAPVSKSSLGR. Positions 366 to 379 are enriched in pro residues; the sequence is LGPPDPGSWPPVPS. Residues 448 to 463 are compositionally biased toward basic and acidic residues; it reads KGKELRASKDKVFSDP. The required for nuclear localization stretch occupies residues 546–563; that stretch reads RRAVEFRDSSLPRSRRPS. The segment covering 570-583 has biased composition (polar residues); it reads ASRTLTPNLAPSQD.

As to quaternary structure, interacts (via proline-rich region) with GRB2 (via SH3 domain 2). Interacts (via N-terminus) with CBX5.

Its subcellular location is the chromosome. It is found in the nucleus. The protein resides in the nucleus lamina. The protein localises to the nucleoplasm. Its function is as follows. Functions in tethering peripheral heterochromatin to the nuclear lamina during interphase, possibly through the interaction with heterochromatin protein CBX5/HP1 alpha. Might play a role in reattaching heterochromatin to the nuclear lamina at mitotic exit. Promotes myoblast differentiation during skeletal myogenesis, possibly by stimulating transcription factor MyoD activity via binding to CBX5/HP1 alpha. Involved in the positive regulation of the PI3K-Akt-mTOR signaling pathway and in promoting cell proliferation, possibly via binding to GRB2. This is Proline-rich protein 14 (Prr14) from Mus musculus (Mouse).